Reading from the N-terminus, the 159-residue chain is Globin CTT-W (159 aa).

A signal peptide spans 1 to 16 (MKFLVILTLCIAGAIA). The 143-residue stretch at 17–159 (HCDKAPFIKA…HHAIVYSILE (143 aa)) folds into the Globin domain. Residues H73 and H108 each coordinate heme b.

Belongs to the globin family.

The sequence is that of Globin CTT-W (CTT-W) from Chironomus thummi piger (Midge).